A 452-amino-acid chain; its full sequence is Phosphoglucosamine mutase (452 aa).

The active-site Phosphoserine intermediate is serine 104. Positions 104, 246, 248, and 250 each coordinate Mg(2+). At serine 104 the chain carries Phosphoserine.

It belongs to the phosphohexose mutase family. Requires Mg(2+) as cofactor. Activated by phosphorylation.

It catalyses the reaction alpha-D-glucosamine 1-phosphate = D-glucosamine 6-phosphate. Its function is as follows. Catalyzes the conversion of glucosamine-6-phosphate to glucosamine-1-phosphate. The sequence is that of Phosphoglucosamine mutase from Streptomyces avermitilis (strain ATCC 31267 / DSM 46492 / JCM 5070 / NBRC 14893 / NCIMB 12804 / NRRL 8165 / MA-4680).